A 377-amino-acid polypeptide reads, in one-letter code: Metallo-hydrolase mfmC (377 aa).

His126, His128, Asp130, His131, His209, and Asp233 together coordinate Zn(2+).

Belongs to the metallo-beta-lactamase superfamily.

Its pathway is secondary metabolite biosynthesis; terpenoid biosynthesis. Functionally, metallo-hydrolase; part of the gene cluster that mediates the biosynthesis of the phthalide-terpenoid hybrid 11'-O-desmethylfendlerol. Within the pathway, mfma and mfmC act together to convert 3,5-dimethylorsellinic acid (DMOA) into the phthalide 5,7-dihydroxy-4-(hydroxymethyl)-6-methylphthalide. The biosynthesis of 11'-O-desmethylfendlerol begins with the NR-PKS mfmB that forms 3,5-dimethylorsellinic acid (DMOA), which is then transformed into the phthalide 5,7-dihydroxy-4-(hydroxymethyl)-6-methylphthalide by the cytochrome P450 monooxygenase mfmA and the hydrolase mfmC. Subsequently, the methyltransferase mfmE catalyzes 7-O-methylation to yield 5-hydroxy-4-(hydroxymethyl)-7-methoxy-6-methylphthalide, which undergoes C-3 hydroxylation by the cytochrome P450 monooxygenase mfmF. The resultant cyclopolic acid (2,5-dihydroxy-4-(hydroxymethyl)-7-methoxy-6-methylphthalide) is then farnesylated by the DMATS-type prenyltransferase mfmD to afford 5-O-farnesylcyclopolic acid. Finally, the Pyr4-family terpene cyclase mfmH cyclizes the farnesyl moiety of 5-O-farnesylcyclopolic acid into a drimane-like structure, thus completing the biosynthesis of 11'-O-desmethylfendlerol. This chain is Metallo-hydrolase mfmC, found in Annulohypoxylon moriforme (Filamentous fungus).